The chain runs to 514 residues: 2,3-bisphosphoglycerate-independent phosphoglycerate mutase (514 aa).

Residues D14 and S64 each coordinate Mn(2+). Residue S64 is the Phosphoserine intermediate of the active site. Substrate is bound by residues H125, 155 to 156, R187, R193, 263 to 266, and K337; these read RD and RADR. Mn(2+)-binding residues include D404, H408, D445, H446, and H464.

Belongs to the BPG-independent phosphoglycerate mutase family. In terms of assembly, monomer. The cofactor is Mn(2+).

The catalysed reaction is (2R)-2-phosphoglycerate = (2R)-3-phosphoglycerate. Its pathway is carbohydrate degradation; glycolysis; pyruvate from D-glyceraldehyde 3-phosphate: step 3/5. In terms of biological role, catalyzes the interconversion of 2-phosphoglycerate and 3-phosphoglycerate. The polypeptide is 2,3-bisphosphoglycerate-independent phosphoglycerate mutase (Pseudoalteromonas translucida (strain TAC 125)).